Here is a 549-residue protein sequence, read N- to C-terminus: Chaperonin GroEL (549 aa).

Residues 30–33 (TLGP), K51, 87–91 (DGTTT), G415, and D496 contribute to the ATP site.

Belongs to the chaperonin (HSP60) family. Forms a cylinder of 14 subunits composed of two heptameric rings stacked back-to-back. Interacts with the co-chaperonin GroES.

It localises to the cytoplasm. It catalyses the reaction ATP + H2O + a folded polypeptide = ADP + phosphate + an unfolded polypeptide.. Its function is as follows. Together with its co-chaperonin GroES, plays an essential role in assisting protein folding. The GroEL-GroES system forms a nano-cage that allows encapsulation of the non-native substrate proteins and provides a physical environment optimized to promote and accelerate protein folding. The sequence is that of Chaperonin GroEL from Acidiphilium cryptum (strain JF-5).